Here is a 228-residue protein sequence, read N- to C-terminus: Fluoride-specific ion channel FluC (228 aa).

The next 7 helical transmembrane spans lie at 3 to 23 (LSLFAIALGGAAGALARFWVS), 37 to 57 (GTLFINVSGSFLMGFLSVMMI), 72 to 92 (VGFLGAYTTFSTFSLETLALF), 101 to 121 (ALNVLLSVVLCLAAVWVGAVL), 141 to 161 (IFGAACGMSLLAGFAAALAFA), 172 to 192 (LVLVALTGLVVVGTLVALVVT), and 202 to 222 (LWGAFTLSAFAAVVFLSLGLV). Na(+)-binding residues include Gly76 and Thr79.

The protein belongs to the fluoride channel Fluc/FEX (TC 1.A.43) family.

The protein resides in the cell inner membrane. It catalyses the reaction fluoride(in) = fluoride(out). Its activity is regulated as follows. Na(+) is not transported, but it plays an essential structural role and its presence is essential for fluoride channel function. Fluoride-specific ion channel. Important for reducing fluoride concentration in the cell, thus reducing its toxicity. This chain is Fluoride-specific ion channel FluC, found in Methylococcus capsulatus (strain ATCC 33009 / NCIMB 11132 / Bath).